A 351-amino-acid polypeptide reads, in one-letter code: Spermidine/putrescine import ATP-binding protein PotA (351 aa).

In terms of domain architecture, ABC transporter spans 6–236 (LELRNVTKEY…PENAWVANFI (231 aa)). 38-45 (GPSGCGKT) contributes to the ATP binding site.

Belongs to the ABC transporter superfamily. Spermidine/putrescine importer (TC 3.A.1.11.1) family. In terms of assembly, the complex is composed of two ATP-binding proteins (PotA), two transmembrane proteins (PotB and PotC) and a solute-binding protein (PotD).

It localises to the cell membrane. It carries out the reaction ATP + H2O + polyamine-[polyamine-binding protein]Side 1 = ADP + phosphate + polyamineSide 2 + [polyamine-binding protein]Side 1.. Its function is as follows. Part of the ABC transporter complex PotABCD involved in spermidine/putrescine import. Responsible for energy coupling to the transport system. The polypeptide is Spermidine/putrescine import ATP-binding protein PotA (Mycoplasma mycoides subsp. mycoides SC (strain CCUG 32753 / NCTC 10114 / PG1)).